The sequence spans 187 residues: Calmodulin-like protein 30 (187 aa).

Residues 21–47 (KPSRMFSRDRQSSGLSSPGPGGFSQPS) are disordered. The span at 32–47 (SSGLSSPGPGGFSQPS) shows a compositional bias: low complexity. 4 consecutive EF-hand domains span residues 46-81 (PSVN…LGQE), 82-117 (RAIE…SGGI), 129-152 (FDLN…LGER), and 153-187 (CSLE…SNNV). The Ca(2+) site is built by Asp-59, Asp-61, Asp-63, Lys-65, Glu-70, Asp-95, Asp-97, Asp-99, Glu-106, Asp-130, Asn-132, Asp-134, Lys-136, Glu-141, Asp-166, Asp-168, Asp-170, and Glu-177.

This sequence belongs to the calmodulin family.

In terms of biological role, potential calcium sensor. The protein is Calmodulin-like protein 30 of Arabidopsis thaliana (Mouse-ear cress).